A 619-amino-acid chain; its full sequence is Chaperone protein HscA homolog (619 aa).

It belongs to the heat shock protein 70 family.

Its function is as follows. Chaperone involved in the maturation of iron-sulfur cluster-containing proteins. Has a low intrinsic ATPase activity which is markedly stimulated by HscB. The chain is Chaperone protein HscA homolog from Haemophilus influenzae (strain 86-028NP).